Consider the following 131-residue polypeptide: Glycine cleavage system H protein (131 aa).

Residues 24-106 (RVTVGISDHA…YGEGWIFVVE (83 aa)) form the Lipoyl-binding domain. K65 is modified (N6-lipoyllysine).

The protein belongs to the GcvH family. In terms of assembly, the glycine cleavage system is composed of four proteins: P, T, L and H. (R)-lipoate serves as cofactor.

Functionally, the glycine cleavage system catalyzes the degradation of glycine. The H protein shuttles the methylamine group of glycine from the P protein to the T protein. In Xanthomonas campestris pv. campestris (strain 8004), this protein is Glycine cleavage system H protein.